The primary structure comprises 187 residues: Putative manganese efflux pump MntP (187 aa).

6 helical membrane passes run 3–23, 39–59, 65–85, 103–123, 124–144, and 166–186; these read WLTI…VALA, LGFH…LLGM, ISAY…GRMV, GMTM…VGLS, IAML…VAGV, and ICGG…HTLL.

This sequence belongs to the MntP (TC 9.B.29) family.

The protein localises to the cell inner membrane. Probably functions as a manganese efflux pump. The chain is Putative manganese efflux pump MntP from Geobacter sp. (strain M21).